We begin with the raw amino-acid sequence, 270 residues long: MRTKNVCTFQLILFPKVRSYIPLPLILKRIEITKNCISTRGETTKTSVTEKLSEEKTVVVEPVFGFLKAHFHSTRFSEEATKRRKRKWALLVVILRKYTARNSKQKRTKKTRQKGVRSSFIDERTPFSFIFWLVLFRPLFNVLPCSAQSLFVQEFFITSPCLVCPAFPLEQNVSAFAPSTNGTKTKQMITITPMIRFIVVQLLTLRFSYRTVKGISPLRRRAWFFLWFNRSKCFCVGSIHKRNKNKADKQYQTEYSFHCCSTPIIFILVR.

It carries out the reaction Endonucleolytic cleavage of DNA to give specific double-stranded fragments with terminal 5'-phosphates.. Functionally, a P subtype restriction enzyme that recognizes the double-stranded sequence 5'-GATATC-3' and cleaves after T-3. This is Type II restriction enzyme CeqI (ceqIR) from Rhodococcus hoagii (Corynebacterium equii).